The following is a 396-amino-acid chain: MPEGALRNFTINFGPQHPAAHGVLRLVLELDGEVVERVDPHIGLLHRGTEKLIEQKTYLQAIPYFDRLDYVAPMNQEHAFCLAAEKLLGIAVPRRAQLIRVLYCEIGRILSHLLNVTTQAMDVGALTPPLWGFEEREKLMVFYERASGSRMHAAYFRIGGVHQDLPPQLIEDIETWCDAFPQVVDDLDRLLTGNRIFKQRNVDIGVVTLPQAWEWGFSGVMVRGSGAAWDLRKSQPYECYAEMDFDVPIGKNGDCYDRYLLRMEEMRQSVSIMKQCIAKLRAPDGQGPVALEDHKIVPPRRGEMKRSMEALIHHFKLYTEGFRVPAGEVYVAVEAPKGEFGVFLVSDGTNKPYKCKIRAPGFAHLQAMDFVTRGHLLADVSAILGSLDIVFGEVDR.

The protein belongs to the complex I 49 kDa subunit family. As to quaternary structure, NDH-1 is composed of 14 different subunits. Subunits NuoB, C, D, E, F, and G constitute the peripheral sector of the complex.

It localises to the cell inner membrane. The catalysed reaction is a quinone + NADH + 5 H(+)(in) = a quinol + NAD(+) + 4 H(+)(out). Functionally, NDH-1 shuttles electrons from NADH, via FMN and iron-sulfur (Fe-S) centers, to quinones in the respiratory chain. The immediate electron acceptor for the enzyme in this species is believed to be ubiquinone. Couples the redox reaction to proton translocation (for every two electrons transferred, four hydrogen ions are translocated across the cytoplasmic membrane), and thus conserves the redox energy in a proton gradient. This Rhodopseudomonas palustris (strain BisA53) protein is NADH-quinone oxidoreductase subunit D.